Consider the following 187-residue polypeptide: POM121 and ZP3 fusion protein (187 aa).

The tract at residues 166-187 (GTPSHSRRQPRVVSQWSTSASL) is disordered. Residues 177–187 (VVSQWSTSASL) are compositionally biased toward polar residues.

Expressed in spleen, thymus, pancreas, testis, ovary, small intestine, colon and lymphocytes.

In Homo sapiens (Human), this protein is POM121 and ZP3 fusion protein (POMZP3).